The sequence spans 321 residues: Ribose-phosphate pyrophosphokinase (321 aa).

Residues 39–41 and 98–99 contribute to the ATP site; these read DGE and RQ. H132 and D170 together coordinate Mg(2+). K195 is a catalytic residue. D-ribose 5-phosphate contacts are provided by residues R197, D221, and 225–229; that span reads DTGGT.

Belongs to the ribose-phosphate pyrophosphokinase family. Class I subfamily. In terms of assembly, homohexamer. Mg(2+) serves as cofactor.

The protein localises to the cytoplasm. The enzyme catalyses D-ribose 5-phosphate + ATP = 5-phospho-alpha-D-ribose 1-diphosphate + AMP + H(+). It functions in the pathway metabolic intermediate biosynthesis; 5-phospho-alpha-D-ribose 1-diphosphate biosynthesis; 5-phospho-alpha-D-ribose 1-diphosphate from D-ribose 5-phosphate (route I): step 1/1. Its function is as follows. Involved in the biosynthesis of the central metabolite phospho-alpha-D-ribosyl-1-pyrophosphate (PRPP) via the transfer of pyrophosphoryl group from ATP to 1-hydroxyl of ribose-5-phosphate (Rib-5-P). The sequence is that of Ribose-phosphate pyrophosphokinase from Mycoplasmopsis pulmonis (strain UAB CTIP) (Mycoplasma pulmonis).